The primary structure comprises 113 residues: Iron-sulfur cluster insertion protein ErpA (113 aa).

Iron-sulfur cluster contacts are provided by Cys41, Cys105, and Cys107.

It belongs to the HesB/IscA family. Homodimer. The cofactor is iron-sulfur cluster.

Required for insertion of 4Fe-4S clusters for at least IspG. In Actinobacillus succinogenes (strain ATCC 55618 / DSM 22257 / CCUG 43843 / 130Z), this protein is Iron-sulfur cluster insertion protein ErpA.